Here is a 209-residue protein sequence, read N- to C-terminus: Eukaryotic translation initiation factor isoform 4E-2 (209 aa).

A disordered region spans residues 1–29 (MAEVEAALPVAATETPEVAAEGDAGAAEA). Low complexity predominate over residues 9–29 (PVAATETPEVAAEGDAGAAEA). MRNA contacts are provided by residues 51–56 (PGAAWG), Lys83, and 101–102 (WE). An intrachain disulfide couples Cys106 to Cys145. Residues 152–157 (RQRQDK) and 197–200 (RSQK) each bind mRNA.

The protein belongs to the eukaryotic initiation factor 4E family. As to quaternary structure, EIF4F is a multi-subunit complex, the composition of which varies with external and internal environmental conditions. It is composed of at least EIF4A, EIF4E and EIF4G. EIF4E is also known to interact with other partners. In higher plants two isoforms of EIF4F have been identified, named isoform EIF4F and isoform EIF(iso)4F. Isoform EIF4F has subunits p220 and p26, whereas isoform EIF(iso)4F has subunits p82 and p28. Post-translationally, according to the redox status, the Cys-106-Cys-145 disulfide bridge may have a role in regulating protein function by affecting its ability to bind capped mRNA.

The protein resides in the cytoplasm. Its subcellular location is the nucleus. Functionally, component of the protein complex eIF4F, which is involved in the recognition of the mRNA cap, ATP-dependent unwinding of 5'-terminal secondary structure and recruitment of mRNA to the ribosome. Recognizes and binds the 7-methylguanosine-containing mRNA cap during an early step in the initiation of protein synthesis and facilitates ribosome binding by inducing the unwinding of the mRNAs secondary structures. This is Eukaryotic translation initiation factor isoform 4E-2 from Triticum aestivum (Wheat).